The sequence spans 163 residues: Cuticle protein 38 (163 aa).

Repeat copies occupy residues 7-10 (AAPV), 13-16 (AAPA), 20-23 (AAPA), 26-29 (AAPV), 56-59 (AAPA), 62-65 (AAPA), 68-71 (AAPA), 75-78 (AAPA), 81-84 (AAPA), 93-96 (AAPV), 123-126 (AAPA), 135-138 (AAPA), 141-144 (AAPA), and 156-159 (AAPV).

In terms of biological role, component of the cuticle of migratory locust which contains more than 100 different structural proteins. This Locusta migratoria (Migratory locust) protein is Cuticle protein 38.